The following is a 391-amino-acid chain: Coiled-coil domain-containing protein 85C (391 aa).

Coiled coils occupy residues 19 to 86 and 116 to 146; these read EELL…RELC and KEVG…KEII. 2 disordered regions span residues 155-238 and 278-303; these read GAGS…LNDS and PYHS…TRVT. Positions 157–175 are enriched in polar residues; it reads GSRSSIDSQNSLTNLNGSS. Positions 182 to 194 are enriched in low complexity; the sequence is DGSSTSSTGSAGS. The span at 280–303 shows a compositional bias: polar residues; that stretch reads HSESQLSPLPQYQEPLQNGSTRVT.

It belongs to the CCDC85 family.

It localises to the cell junction. It is found in the tight junction. The protein localises to the adherens junction. May play a role in cell-cell adhesion and epithelium development through its interaction with proteins of the beta-catenin family. May play an important role in cortical development, especially in the maintenance of radial glia. The chain is Coiled-coil domain-containing protein 85C (ccdc85c) from Xenopus tropicalis (Western clawed frog).